Consider the following 344-residue polypeptide: MWGIHHARLHTTLKTQQWLPLGSRILIALSGGQDSVCLTRLLLDLQPHWQWSLVAVHCDHRWRADSTANANFVQQLAQKWHLPCEVVSAPDLPKTEAAARSWRYQVFESVAKALDCTHVVTAHTQSDRAESLLLHLLRGTSPDGLATLLPSRSLGAIQLVRPLLGMTRAQTAAFCQAYGLPIWQDETNHNLEYRRNRLRLELIPYLQQHFNPNVEEALAQTAELLASDRAYFEAEVERLAPTVLREHPPALDRLRLREFPLALQRRLIQCFLRQHLKRGLNFRVIEAVRALMTTGNGSQTASLPGGQHLRVCGRWIELVRPMPPPPAPVPPDPGERSPPPSPLY.

30 to 35 (SGGQDS) is a binding site for ATP. Residues 323-344 (PPPPAPVPPDPGERSPPPSPLY) form a disordered region.

Belongs to the tRNA(Ile)-lysidine synthase family.

Its subcellular location is the cytoplasm. The enzyme catalyses cytidine(34) in tRNA(Ile2) + L-lysine + ATP = lysidine(34) in tRNA(Ile2) + AMP + diphosphate + H(+). Functionally, ligates lysine onto the cytidine present at position 34 of the AUA codon-specific tRNA(Ile) that contains the anticodon CAU, in an ATP-dependent manner. Cytidine is converted to lysidine, thus changing the amino acid specificity of the tRNA from methionine to isoleucine. The chain is tRNA(Ile)-lysidine synthase from Thermosynechococcus vestitus (strain NIES-2133 / IAM M-273 / BP-1).